The following is a 92-amino-acid chain: Small ribosomal subunit protein uS19c (92 aa).

Belongs to the universal ribosomal protein uS19 family.

The protein resides in the plastid. Its subcellular location is the chloroplast. Protein S19 forms a complex with S13 that binds strongly to the 16S ribosomal RNA. The protein is Small ribosomal subunit protein uS19c of Phalaenopsis aphrodite subsp. formosana (Moth orchid).